Here is a 359-residue protein sequence, read N- to C-terminus: Chaperone protein DnaJ (359 aa).

The J domain occupies 3 to 68; sequence DYYEILGVPK…ERRQTYDRYG (66 aa). Residues 128 to 205 form a CR-type zinc finger; sequence GVSKDIKYKI…CAGKGFIEEQ (78 aa). Residues cysteine 141, cysteine 144, cysteine 157, cysteine 160, cysteine 179, cysteine 182, cysteine 193, and cysteine 196 each contribute to the Zn(2+) site. 4 CXXCXGXG motif repeats span residues 141-148, 157-164, 179-186, and 193-200; these read CKTCDGTG, CPYCGGSG, CPFCKGSG, and CHDCAGKG.

The protein belongs to the DnaJ family. In terms of assembly, homodimer. Zn(2+) is required as a cofactor.

Its subcellular location is the cytoplasm. Functionally, participates actively in the response to hyperosmotic and heat shock by preventing the aggregation of stress-denatured proteins and by disaggregating proteins, also in an autonomous, DnaK-independent fashion. Unfolded proteins bind initially to DnaJ; upon interaction with the DnaJ-bound protein, DnaK hydrolyzes its bound ATP, resulting in the formation of a stable complex. GrpE releases ADP from DnaK; ATP binding to DnaK triggers the release of the substrate protein, thus completing the reaction cycle. Several rounds of ATP-dependent interactions between DnaJ, DnaK and GrpE are required for fully efficient folding. Also involved, together with DnaK and GrpE, in the DNA replication of plasmids through activation of initiation proteins. This Campylobacter hominis (strain ATCC BAA-381 / DSM 21671 / CCUG 45161 / LMG 19568 / NCTC 13146 / CH001A) protein is Chaperone protein DnaJ.